A 213-amino-acid polypeptide reads, in one-letter code: LexA repressor (213 aa).

A DNA-binding region (H-T-H motif) is located at residues 31–51 (RAEISRELGFRSPNAAEEYLK). Active-site for autocatalytic cleavage activity residues include Ser129 and Lys166.

It belongs to the peptidase S24 family. In terms of assembly, homodimer.

It catalyses the reaction Hydrolysis of Ala-|-Gly bond in repressor LexA.. Represses a number of genes involved in the response to DNA damage (SOS response), including recA and lexA. In the presence of single-stranded DNA, RecA interacts with LexA causing an autocatalytic cleavage which disrupts the DNA-binding part of LexA, leading to derepression of the SOS regulon and eventually DNA repair. The chain is LexA repressor from Mannheimia succiniciproducens (strain KCTC 0769BP / MBEL55E).